The sequence spans 123 residues: Protein TraJ (123 aa).

In terms of assembly, monomer.

Its subcellular location is the cytoplasm. In terms of biological role, transfer of plasmid RP4 during bacterial conjugation requires the plasmid-encoded TraJ protein, which binds to a 19-base pair invert sequence repetition within the transfer origin. TraJ protein is bound to only one side of the DNA helix. This nucleoprotein structure is the initial complex in the pathway to assemble a functional relaxosome. This Escherichia coli protein is Protein TraJ (traJ).